The sequence spans 215 residues: Ras-related protein Rab-14 (215 aa).

An N-acetylalanine modification is found at A2. GTP-binding residues include G21, V22, G23, K24, S25, C26, A38, D39, C40, H42, and T43. A Mg(2+)-binding site is contributed by S25. Positions 42–47 (HTIGVE) match the Switch 1 motif. Mg(2+) contacts are provided by T43 and D66. Residues 68-77 (AGQERFRAVT) carry the Switch 2 motif. GTP-binding residues include G69, N124, K125, D127, A155, and K156. Positions 188–215 (SGVQHKPSAPQGGRLTSEPQPQREGCGC) are disordered. 2 S-geranylgeranyl cysteine lipidation sites follow: C213 and C215. Position 215 is a cysteine methyl ester (C215).

It belongs to the small GTPase superfamily. Rab family. It depends on Mg(2+) as a cofactor.

It is found in the recycling endosome. Its subcellular location is the early endosome membrane. The protein resides in the golgi apparatus membrane. It localises to the golgi apparatus. The protein localises to the trans-Golgi network membrane. It is found in the cytoplasmic vesicle. Its subcellular location is the phagosome. It catalyses the reaction GTP + H2O = GDP + phosphate + H(+). Its activity is regulated as follows. Regulated by guanine nucleotide exchange factors (GEFs) including DENND6A and DENND6B which promote the exchange of bound GDP for free GTP. Regulated by GTPase activating proteins (GAPs) which increase the GTP hydrolysis activity. Inhibited by GDP dissociation inhibitors (GDIs) which prevent Rab-GDP dissociation. Functionally, the small GTPases Rab are key regulators of intracellular membrane trafficking, from the formation of transport vesicles to their fusion with membranes. Rabs cycle between an inactive GDP-bound form and an active GTP-bound form that is able to recruit to membranes different set of downstream effectors directly responsible for vesicle formation, movement, tethering and fusion. Involved in membrane trafficking between the Golgi complex and endosomes during early embryonic development. Regulates the Golgi to endosome transport of FGFR-containing vesicles during early development, a key process for developing basement membrane and epiblast and primitive endoderm lineages during early postimplantation development. May act by modulating the kinesin KIF16B-cargo association to endosomes. Regulates, together with its guanine nucleotide exchange factor DENND6A, the specific endocytic transport of ADAM10, N-cadherin/CDH2 shedding and cell-cell adhesion. Mediates endosomal tethering and fusion through the interaction with RUFY1 and RAB4B. Interaction with RAB11FIP1 may function in the process of neurite formation. This is Ras-related protein Rab-14 (RAB14) from Gallus gallus (Chicken).